Consider the following 239-residue polypeptide: Pyridoxine 5'-phosphate synthase (239 aa).

Asn7 serves as a coordination point for 3-amino-2-oxopropyl phosphate. Position 9-10 (9-10) interacts with 1-deoxy-D-xylulose 5-phosphate; sequence DH. Arg18 provides a ligand contact to 3-amino-2-oxopropyl phosphate. His43 acts as the Proton acceptor in catalysis. 1-deoxy-D-xylulose 5-phosphate contacts are provided by Arg45 and His50. Residue Glu70 is the Proton acceptor of the active site. 1-deoxy-D-xylulose 5-phosphate is bound at residue Thr100. The active-site Proton donor is His191. 3-amino-2-oxopropyl phosphate-binding positions include Gly192 and 213–214; that span reads GH.

This sequence belongs to the PNP synthase family. In terms of assembly, homooctamer; tetramer of dimers.

The protein resides in the cytoplasm. The enzyme catalyses 3-amino-2-oxopropyl phosphate + 1-deoxy-D-xylulose 5-phosphate = pyridoxine 5'-phosphate + phosphate + 2 H2O + H(+). The protein operates within cofactor biosynthesis; pyridoxine 5'-phosphate biosynthesis; pyridoxine 5'-phosphate from D-erythrose 4-phosphate: step 5/5. Its function is as follows. Catalyzes the complicated ring closure reaction between the two acyclic compounds 1-deoxy-D-xylulose-5-phosphate (DXP) and 3-amino-2-oxopropyl phosphate (1-amino-acetone-3-phosphate or AAP) to form pyridoxine 5'-phosphate (PNP) and inorganic phosphate. In Desulforapulum autotrophicum (strain ATCC 43914 / DSM 3382 / VKM B-1955 / HRM2) (Desulfobacterium autotrophicum), this protein is Pyridoxine 5'-phosphate synthase.